Here is a 422-residue protein sequence, read N- to C-terminus: UDP-N-acetylglucosamine 1-carboxyvinyltransferase (422 aa).

A phosphoenolpyruvate-binding site is contributed by 22 to 23 (KN). Residue arginine 94 coordinates UDP-N-acetyl-alpha-D-glucosamine. Cysteine 118 acts as the Proton donor in catalysis. A 2-(S-cysteinyl)pyruvic acid O-phosphothioketal modification is found at cysteine 118. Residues 123–127 (RPVDL), aspartate 309, and isoleucine 331 contribute to the UDP-N-acetyl-alpha-D-glucosamine site.

Belongs to the EPSP synthase family. MurA subfamily.

The protein localises to the cytoplasm. It carries out the reaction phosphoenolpyruvate + UDP-N-acetyl-alpha-D-glucosamine = UDP-N-acetyl-3-O-(1-carboxyvinyl)-alpha-D-glucosamine + phosphate. Its pathway is cell wall biogenesis; peptidoglycan biosynthesis. Cell wall formation. Adds enolpyruvyl to UDP-N-acetylglucosamine. This chain is UDP-N-acetylglucosamine 1-carboxyvinyltransferase, found in Cereibacter sphaeroides (strain ATCC 17029 / ATH 2.4.9) (Rhodobacter sphaeroides).